Consider the following 311-residue polypeptide: Alpha/beta hydrolase domain-containing protein 17C (311 aa).

Residues 48 to 67 (EAPASTAQQPPREEGSGEPA) form a disordered region. Catalysis depends on charge relay system residues Ser193, Asp258, and His287.

The protein belongs to the AB hydrolase superfamily. ABHD17 family. In terms of processing, palmitoylated on cysteine residues located in a cysteine cluster at the N-terminus which promotes membrane localization.

The protein resides in the recycling endosome membrane. The protein localises to the cell projection. Its subcellular location is the dendritic spine. It is found in the postsynaptic density membrane. It catalyses the reaction S-hexadecanoyl-L-cysteinyl-[protein] + H2O = L-cysteinyl-[protein] + hexadecanoate + H(+). Functionally, hydrolyzes fatty acids from S-acylated cysteine residues in proteins. Has depalmitoylating activity towards NRAS. The sequence is that of Alpha/beta hydrolase domain-containing protein 17C from Xenopus laevis (African clawed frog).